The chain runs to 330 residues: Inactive hydroxysteroid dehydrogenase-like protein 1 (330 aa).

Residue Ala-2 is modified to N-acetylalanine. The interval 2–82 is required for mitochondria translocation; sequence AAVDSFYLLY…SGATDGIGKA (81 aa). NADP(+) contacts are provided by residues 74-80, Asp-125, and Lys-222; that span reads GATDGIG.

The protein belongs to the short-chain dehydrogenases/reductases (SDR) family. 17-beta-HSD 3 subfamily. In terms of assembly, interacts with STYXL1.

It localises to the mitochondrion. This Mus musculus (Mouse) protein is Inactive hydroxysteroid dehydrogenase-like protein 1 (Hsdl1).